Here is a 67-residue protein sequence, read N- to C-terminus: Sperm protamine P1 (67 aa).

A disordered region spans residues 1–67 (MASYRNSRSR…RRRKRNNENK (67 aa)). Composition is skewed to basic residues over residues 7-25 (SRSRSRSRFRRRRGRRSRV) and 34-67 (RSSRRRRRGKGRAHSGKKGRRSGSRRRKRNNENK).

It belongs to the protamine P1 family. In terms of tissue distribution, testis.

It localises to the nucleus. It is found in the chromosome. Functionally, protamines substitute for histones in the chromatin of sperm during the haploid phase of spermatogenesis. They compact sperm DNA into a highly condensed, stable and inactive complex. The polypeptide is Sperm protamine P1 (PRM1) (Isoodon macrourus (Short-nosed bandicoot)).